The following is a 385-amino-acid chain: Cytochrome b (385 aa).

4 helical membrane-spanning segments follow: residues 32–52 (FGSL…TLAM), 76–98 (WFIR…AHMG), 113–133 (PWSI…MGYV), and 179–199 (FFAL…LHLI). The heme b site is built by His-82 and His-96. Residues His-183 and His-197 each contribute to the heme b site. His-202 is an a ubiquinone binding site. 4 consecutive transmembrane segments (helical) span residues 225 to 245 (YSFK…LFVF), 289 to 309 (LGGV…PIVD), 321 to 341 (ISKL…VLGQ), and 348 to 368 (FIVL…ILLP).

Belongs to the cytochrome b family. Fungal cytochrome b-c1 complex contains 10 subunits; 3 respiratory subunits, 2 core proteins and 5 low-molecular weight proteins. Cytochrome b-c1 complex is a homodimer. It depends on heme b as a cofactor.

The protein resides in the mitochondrion inner membrane. Functionally, component of the ubiquinol-cytochrome c reductase complex (complex III or cytochrome b-c1 complex) that is part of the mitochondrial respiratory chain. The b-c1 complex mediates electron transfer from ubiquinol to cytochrome c. Contributes to the generation of a proton gradient across the mitochondrial membrane that is then used for ATP synthesis. The polypeptide is Cytochrome b (COB) (Yarrowia lipolytica (strain CLIB 122 / E 150) (Yeast)).